The chain runs to 382 residues: Inactive serine protease 54 (382 aa).

Residues 1–20 (MAELRGILLLLLYMSHSSSA) form the signal peptide. In terms of domain architecture, Peptidase S1 spans 29-258 (IVDQLHENLV…YSNWIIAKTR (230 aa)). N-linked (GlcNAc...) asparagine glycosylation is present at N113. 3 disulfide bridges follow: C154–C216, C185–C195, and C206–C237.

Belongs to the peptidase S1 family. Plasma kallikrein subfamily.

Its subcellular location is the secreted. This Rattus norvegicus (Rat) protein is Inactive serine protease 54 (Prss54).